The chain runs to 196 residues: Transmembrane protein 126A (196 aa).

The Mitochondrial matrix portion of the chain corresponds to 1 to 34; sequence MENHKSNNTKENITIVDISRKINQLPEAERNLLE. A helical transmembrane segment spans residues 35–55; the sequence is HGSVYVGLNAALCGLIANSLF. Residues 56–57 are Mitochondrial intermembrane-facing; sequence RR. A helical transmembrane segment spans residues 58–78; sequence ILNVTKARIAAGLPMAWIPFL. Over 79-107 the chain is Mitochondrial matrix; it reads TTDITYRCFVSFPLNTGDLDCETCTITRS. The helical transmembrane segment at 108–128 threads the bilayer; that stretch reads GLIGLVIGGLYPVFLAIPVNG. The Mitochondrial intermembrane portion of the chain corresponds to 129 to 159; it reads GLAARYQSALLPHKGNILSYWIRTSKPVFRK. The chain crosses the membrane as a helical span at residues 160–176; that stretch reads MLFPIMLQTMFSAYLGS. Residues 177–196 are Mitochondrial matrix-facing; it reads EQYKLLIKALQLSEPGKEIH.

Belongs to the TMEM126 family. Interacts with OXA1L; promoting cotranslational quality control in mitochondria.

The protein resides in the mitochondrion inner membrane. In terms of biological role, protein required for the cotranslational protein quality control in the inner membrane of the mitochondria. Associates with newly synthesized polypeptides and may act as a chaperone that cooperates with OXA1L for the insertion of newly synthesized mitochondrial proteins into the inner membrane. Required for the assembly of the ND4 module of mitochondrial complex I. The polypeptide is Transmembrane protein 126A (TMEM126A) (Pongo abelii (Sumatran orangutan)).